A 121-amino-acid polypeptide reads, in one-letter code: Large ribosomal subunit protein uL14c (121 aa).

In terms of assembly, component of the chloroplast large ribosomal subunit (LSU). Mature 70S chloroplast ribosomes of higher plants consist of a small (30S) and a large (50S) subunit. The 30S small subunit contains 1 molecule of ribosomal RNA (16S rRNA) and 24 different proteins. The 50S large subunit contains 3 rRNA molecules (23S, 5S and 4.5S rRNA) and 33 different proteins.

The protein resides in the plastid. The protein localises to the chloroplast. In terms of biological role, component of the chloroplast ribosome (chloro-ribosome), a dedicated translation machinery responsible for the synthesis of chloroplast genome-encoded proteins, including proteins of the transcription and translation machinery and components of the photosynthetic apparatus. The protein is Large ribosomal subunit protein uL14c of Spinacia oleracea (Spinach).